The primary structure comprises 449 residues: MLWKITDNVKYEEDCEDRHDSSSNGNPRIPHLSSPGQHLYSPAPPLSHTGVAEYQPPPYFPPPYQQLAYSQSADHYSHLGEAYAAAMNPLHQPAATGSQQQAWPGRQSQEGSSLASHHSRSASLIPHISGLEGGSVSARREVYRRSDLLLPHAHALEAGLAENLGLHEMAHPIEEVQNVDDAHLLLHDQTVIRKGPISMTKNPLGLPCQKDLVGVVMNPSEVFCSVPGRLSLLSSTSKYKVTVAEVQRRLSPPECLNASLLGGVLRRAKSKNGGRSLREKLDKIGLNLPAGRRKAAHVTLLTSLVEGEAVHLARDFAYVCEAEFPSKAVADYLTRPHLGGRNEMATRKSMLLAAQQVCKEFTDLLHQDRTPNGNNRPAQVLEPNIQNCLSHFSLITHGFGSQAICAAVSAVQNYIKEALIAIDKSYMNPGDQSPADSSKTMEKMEKHRK.

Residue Lys10 forms a Glycyl lysine isopeptide (Lys-Gly) (interchain with G-Cter in SUMO) linkage. A disordered region spans residues 13 to 58 (EDCEDRHDSSSNGNPRIPHLSSPGQHLYSPAPPLSHTGVAEYQPPP). A PPxY motif motif is present at residues 59–64 (YFPPPY). The tract at residues 94–130 (AATGSQQQAWPGRQSQEGSSLASHHSRSASLIPHISG) is disordered. A compositionally biased stretch (polar residues) spans 95 to 111 (ATGSQQQAWPGRQSQEG). The segment covering 112 to 124 (SSLASHHSRSASL) has biased composition (low complexity). Ser251 bears the Phosphoserine; by PKA mark. Residues 292-423 (RRKAAHVTLL…YIKEALIAID (132 aa)) form an H-S-H (helix-span-helix), dimerization region. Residues 426 to 449 (YMNPGDQSPADSSKTMEKMEKHRK) are disordered. The residue at position 433 (Ser433) is a Phosphoserine. The span at 439 to 449 (KTMEKMEKHRK) shows a compositional bias: basic and acidic residues.

The protein belongs to the AP-2 family. As to quaternary structure, binds DNA as a dimer. Can form homodimers or heterodimers with other AP-2 family members. Interacts with WWOX. Interacts with UBE2I. Interacts with KCTD1; this interaction represses transcription activation. Interacts with CITED2 (via C-terminus); the interaction stimulates TFAP2B-transcriptional activity. Interacts with CITED4. Interacts with MTA1. Sumoylated on Lys-10; which inhibits transcriptional activity. As to expression, expressed in lung, ovary and testis. Expressed in most squamous epithelia. Also, detected in several exocrine glands including the prostate, the preputial and salivary glands, serous glands of the tongue and ocular harderian glands.

It is found in the nucleus. Its function is as follows. Sequence-specific DNA-binding transcription factor that interacts with cellular enhancer elements to regulate transcription of selected genes, and which plays a key role in early embryonic development. AP-2 factors bind to the consensus sequence 5'-GCCNNNGGC-3' and activate genes involved in a large spectrum of important biological functions. TFAP2C plays a key role in early embryonic development by regulating both inner cell mass (ICM) and trophectoderm differentiation. At the 8-cell stage, during morula development, controls expression of cell-polarity genes. Upon trophoblast commitment, binds to late trophectoderm genes in blastocysts together with CDX2, and later to extra-embryonic ectoderm genes together with SOX2. Binds to both closed and open chromatin with other transcription factors. The polypeptide is Transcription factor AP-2 gamma (Mus musculus (Mouse)).